We begin with the raw amino-acid sequence, 880 residues long: Interference hedgehog (880 aa).

The signal sequence occupies residues 1–20 (MTLLTSSLLFFSLLTSRLEA). Topologically, residues 21–703 (IPVLEKSPAH…ETFNMSPMLT (683 aa)) are extracellular. 4 consecutive Ig-like C2-type domains span residues 45 to 142 (PGVR…IARL), 132 to 234 (PLVV…IQLT), 252 to 340 (PHLL…YIKV), and 346 to 432 (PQIV…LQVN). 4 disulfide bridges follow: cysteine 68–cysteine 126, cysteine 173–cysteine 220, cysteine 276–cysteine 324, and cysteine 367–cysteine 414. Residues asparagine 102 and asparagine 209 are each glycosylated (N-linked (GlcNAc...) asparagine). The interval 426–467 (GTLLQVNPKQIQEPRESGGTHRPKPNQGSKQKQMYPPTPPNV) is disordered. Fibronectin type-III domains follow at residues 461-567 (PPTP…LQPG) and 575-670 (VPEL…TQRP). Asparagine 466 carries an N-linked (GlcNAc...) asparagine glycan. 4 residues coordinate heparin: arginine 497, lysine 501, lysine 503, and arginine 541. Asparagine 557 carries N-linked (GlcNAc...) asparagine glycosylation. Positions 662 to 697 (LKQGRTQRPKTSTTEEPTLQMGDRDTTTPSHNETFN) are disordered. 2 stretches are compositionally biased toward polar residues: residues 665-678 (GRTQ…TEEP) and 688-697 (TTPSHNETFN). Residue asparagine 693 is glycosylated (N-linked (GlcNAc...) asparagine). A helical transmembrane segment spans residues 704–724 (GTIGGGAVLILLLISTCLCVC). The Cytoplasmic portion of the chain corresponds to 725–880 (RRRSSRSRGN…SSGSLNSVGV (156 aa)). Disordered stretches follow at residues 728–762 (SSRS…QRQR) and 775–880 (QQQQ…SVGV). 2 stretches are compositionally biased toward low complexity: residues 823–837 (RAGG…NNNN) and 864–880 (SSRS…SVGV).

Belongs to the immunoglobulin superfamily. IHOG family. Homodimer. Heterotetramer; 2 iHog chains bind 2 hh chains when facilitated by heparin, heparin is required to promote high-affinity interactions between hh and iHog.

Its subcellular location is the membrane. Functionally, mediates response to the active Hedgehog (Hh) protein signal in embryos, functioning upstream or at the level of patched (ptc). This is Interference hedgehog from Drosophila yakuba (Fruit fly).